A 402-amino-acid chain; its full sequence is Acetate kinase (402 aa).

Asparagine 7 is a Mg(2+) binding site. ATP is bound at residue lysine 14. Position 95 (arginine 95) interacts with substrate. Catalysis depends on aspartate 152, which acts as the Proton donor/acceptor. Residues histidine 212–glycine 216, aspartate 286–arginine 288, and glycine 334–asparagine 338 contribute to the ATP site. Glutamate 388 serves as a coordination point for Mg(2+).

It belongs to the acetokinase family. In terms of assembly, homodimer. The cofactor is Mg(2+). It depends on Mn(2+) as a cofactor.

Its subcellular location is the cytoplasm. It carries out the reaction acetate + ATP = acetyl phosphate + ADP. It functions in the pathway metabolic intermediate biosynthesis; acetyl-CoA biosynthesis; acetyl-CoA from acetate: step 1/2. Its function is as follows. Catalyzes the formation of acetyl phosphate from acetate and ATP. Can also catalyze the reverse reaction. The chain is Acetate kinase from Nitratidesulfovibrio vulgaris (strain ATCC 29579 / DSM 644 / CCUG 34227 / NCIMB 8303 / VKM B-1760 / Hildenborough) (Desulfovibrio vulgaris).